A 487-amino-acid chain; its full sequence is Probable Xaa-Pro aminopeptidase MGYG_06974 (487 aa).

D255, D266, E414, and E458 together coordinate Mn(2+).

The protein belongs to the peptidase M24B family. The cofactor is Mn(2+).

It carries out the reaction Release of any N-terminal amino acid, including proline, that is linked to proline, even from a dipeptide or tripeptide.. In terms of biological role, catalyzes the removal of a penultimate prolyl residue from the N-termini of peptides. This chain is Probable Xaa-Pro aminopeptidase MGYG_06974, found in Arthroderma gypseum (strain ATCC MYA-4604 / CBS 118893) (Microsporum gypseum).